A 353-amino-acid polypeptide reads, in one-letter code: Quinolinate synthase (353 aa).

2 residues coordinate iminosuccinate: His-47 and Ser-68. A [4Fe-4S] cluster-binding site is contributed by Cys-113. Iminosuccinate contacts are provided by residues 139–141 (YAN) and Ser-156. Cys-200 contacts [4Fe-4S] cluster. Residues 226–228 (HPE) and Thr-243 contribute to the iminosuccinate site. Cys-297 lines the [4Fe-4S] cluster pocket.

It belongs to the quinolinate synthase family. Type 1 subfamily. The cofactor is [4Fe-4S] cluster.

It is found in the cytoplasm. The catalysed reaction is iminosuccinate + dihydroxyacetone phosphate = quinolinate + phosphate + 2 H2O + H(+). Its pathway is cofactor biosynthesis; NAD(+) biosynthesis; quinolinate from iminoaspartate: step 1/1. Its function is as follows. Catalyzes the condensation of iminoaspartate with dihydroxyacetone phosphate to form quinolinate. The sequence is that of Quinolinate synthase from Yersinia pestis bv. Antiqua (strain Antiqua).